Here is a 200-residue protein sequence, read N- to C-terminus: NADH-quinone oxidoreductase subunit C (200 aa).

The protein belongs to the complex I 30 kDa subunit family. As to quaternary structure, NDH-1 is composed of 14 different subunits. Subunits NuoB, C, D, E, F, and G constitute the peripheral sector of the complex.

The protein resides in the cell inner membrane. It catalyses the reaction a quinone + NADH + 5 H(+)(in) = a quinol + NAD(+) + 4 H(+)(out). Its function is as follows. NDH-1 shuttles electrons from NADH, via FMN and iron-sulfur (Fe-S) centers, to quinones in the respiratory chain. The immediate electron acceptor for the enzyme in this species is believed to be ubiquinone. Couples the redox reaction to proton translocation (for every two electrons transferred, four hydrogen ions are translocated across the cytoplasmic membrane), and thus conserves the redox energy in a proton gradient. The protein is NADH-quinone oxidoreductase subunit C of Chelativorans sp. (strain BNC1).